The chain runs to 466 residues: Ribulose bisphosphate carboxylase large chain (466 aa).

N6,N6,N6-trimethyllysine is present on Lys5. Asn114 and Thr164 together coordinate substrate. Lys166 serves as the catalytic Proton acceptor. Lys168 contributes to the substrate binding site. Positions 192, 194, and 195 each coordinate Mg(2+). Lys192 is modified (N6-carboxylysine). The Proton acceptor role is filled by His285. The substrate site is built by Arg286, His318, and Ser370.

Belongs to the RuBisCO large chain family. Type I subfamily. As to quaternary structure, heterohexadecamer of 8 large chains and 8 small chains; disulfide-linked. The disulfide link is formed within the large subunit homodimers. The cofactor is Mg(2+). The disulfide bond which can form in the large chain dimeric partners within the hexadecamer appears to be associated with oxidative stress and protein turnover.

It is found in the plastid. The protein localises to the chloroplast. The catalysed reaction is 2 (2R)-3-phosphoglycerate + 2 H(+) = D-ribulose 1,5-bisphosphate + CO2 + H2O. It catalyses the reaction D-ribulose 1,5-bisphosphate + O2 = 2-phosphoglycolate + (2R)-3-phosphoglycerate + 2 H(+). RuBisCO catalyzes two reactions: the carboxylation of D-ribulose 1,5-bisphosphate, the primary event in carbon dioxide fixation, as well as the oxidative fragmentation of the pentose substrate in the photorespiration process. Both reactions occur simultaneously and in competition at the same active site. This chain is Ribulose bisphosphate carboxylase large chain, found in Aesculus pavia (Red buckeye).